A 237-amino-acid polypeptide reads, in one-letter code: UPF0502 protein HEAR1280 (237 aa).

The segment covering 1–13 (MNTEVMHSTSTES) has biased composition (polar residues). The tract at residues 1–21 (MNTEVMHSTSTESDAQEKPQA) is disordered.

This sequence belongs to the UPF0502 family.

The chain is UPF0502 protein HEAR1280 from Herminiimonas arsenicoxydans.